Here is a 376-residue protein sequence, read N- to C-terminus: Lipoyl synthase, mitochondrial (376 aa).

The [4Fe-4S] cluster site is built by cysteine 103, cysteine 108, cysteine 114, cysteine 134, cysteine 138, cysteine 141, and serine 349. The Radical SAM core domain maps to 119–338 (EHGTQTATIM…EDRGNQLGFL (220 aa)).

The protein belongs to the radical SAM superfamily. Lipoyl synthase family. [4Fe-4S] cluster serves as cofactor.

Its subcellular location is the mitochondrion. The enzyme catalyses [[Fe-S] cluster scaffold protein carrying a second [4Fe-4S](2+) cluster] + N(6)-octanoyl-L-lysyl-[protein] + 2 oxidized [2Fe-2S]-[ferredoxin] + 2 S-adenosyl-L-methionine + 4 H(+) = [[Fe-S] cluster scaffold protein] + N(6)-[(R)-dihydrolipoyl]-L-lysyl-[protein] + 4 Fe(3+) + 2 hydrogen sulfide + 2 5'-deoxyadenosine + 2 L-methionine + 2 reduced [2Fe-2S]-[ferredoxin]. Its pathway is protein modification; protein lipoylation via endogenous pathway; protein N(6)-(lipoyl)lysine from octanoyl-[acyl-carrier-protein]: step 2/2. Its function is as follows. Catalyzes the radical-mediated insertion of two sulfur atoms into the C-6 and C-8 positions of the octanoyl moiety bound to the lipoyl domains of lipoate-dependent enzymes, thereby converting the octanoylated domains into lipoylated derivatives. The protein is Lipoyl synthase, mitochondrial of Drosophila ananassae (Fruit fly).